The sequence spans 238 residues: Flagellar L-ring protein (238 aa).

The first 16 residues, 1-16 (MNKAILAVAMVLLLAG), serve as a signal peptide directing secretion. Cys-17 carries the N-palmitoyl cysteine lipid modification. Cys-17 carries S-diacylglycerol cysteine lipidation.

Belongs to the FlgH family. As to quaternary structure, the basal body constitutes a major portion of the flagellar organelle and consists of four rings (L,P,S, and M) mounted on a central rod.

It is found in the cell outer membrane. The protein localises to the bacterial flagellum basal body. Assembles around the rod to form the L-ring and probably protects the motor/basal body from shearing forces during rotation. The chain is Flagellar L-ring protein from Brucella abortus (strain 2308).